The following is a 127-amino-acid chain: NADPH-dependent 7-cyano-7-deazaguanine reductase (127 aa).

C40 acts as the Thioimide intermediate in catalysis. Residue D47 is the Proton donor of the active site. Residues 62–64 and 81–82 each bind substrate; these read VEL and HE.

Belongs to the GTP cyclohydrolase I family. QueF type 1 subfamily.

It is found in the cytoplasm. It catalyses the reaction 7-aminomethyl-7-carbaguanine + 2 NADP(+) = 7-cyano-7-deazaguanine + 2 NADPH + 3 H(+). Its pathway is tRNA modification; tRNA-queuosine biosynthesis. Catalyzes the NADPH-dependent reduction of 7-cyano-7-deazaguanine (preQ0) to 7-aminomethyl-7-deazaguanine (preQ1). The chain is NADPH-dependent 7-cyano-7-deazaguanine reductase from Campylobacter lari (strain RM2100 / D67 / ATCC BAA-1060).